Here is a 103-residue protein sequence, read N- to C-terminus: Large ribosomal subunit protein bL21 (103 aa).

This sequence belongs to the bacterial ribosomal protein bL21 family. Part of the 50S ribosomal subunit. Contacts protein L20.

In terms of biological role, this protein binds to 23S rRNA in the presence of protein L20. This is Large ribosomal subunit protein bL21 from Yersinia pseudotuberculosis serotype O:1b (strain IP 31758).